A 106-amino-acid chain; its full sequence is ATP-dependent Clp protease adapter protein ClpS (106 aa).

Belongs to the ClpS family. As to quaternary structure, binds to the N-terminal domain of the chaperone ClpA.

Functionally, involved in the modulation of the specificity of the ClpAP-mediated ATP-dependent protein degradation. This is ATP-dependent Clp protease adapter protein ClpS from Erwinia tasmaniensis (strain DSM 17950 / CFBP 7177 / CIP 109463 / NCPPB 4357 / Et1/99).